The sequence spans 100 residues: UPF0473 protein LMHCC_1068 (100 aa).

Belongs to the UPF0473 family.

The sequence is that of UPF0473 protein LMHCC_1068 from Listeria monocytogenes serotype 4a (strain HCC23).